Reading from the N-terminus, the 755-residue chain is Catalase-peroxidase (755 aa).

The tryptophyl-tyrosyl-methioninium (Trp-Tyr) (with M-267) cross-link spans 93-241 (WHSAGTYRVF…LAAAHMGLIY (149 aa)). H94 serves as the catalytic Proton acceptor. The tryptophyl-tyrosyl-methioninium (Tyr-Met) (with W-93) cross-link spans 241–267 (YVNPEGPDGNPDPVAAARDIRVTFGRM). Residue H282 coordinates heme b.

This sequence belongs to the peroxidase family. Peroxidase/catalase subfamily. In terms of assembly, homodimer or homotetramer. Heme b is required as a cofactor. In terms of processing, formation of the three residue Trp-Tyr-Met cross-link is important for the catalase, but not the peroxidase activity of the enzyme.

Its subcellular location is the cytoplasm. It catalyses the reaction H2O2 + AH2 = A + 2 H2O. It carries out the reaction 2 H2O2 = O2 + 2 H2O. Its function is as follows. Bifunctional enzyme with both catalase and broad-spectrum peroxidase activity. This Podospora anserina (strain S / ATCC MYA-4624 / DSM 980 / FGSC 10383) (Pleurage anserina) protein is Catalase-peroxidase.